The primary structure comprises 197 residues: MASSTALSLSWSSSPCWSHSFNGGANETLKVSERRFNFEVVSQKKAKKLRKVILKEDVTDLGKQGQLLDVKAGFFRNFLLPTGKAQLMTPLLLKELKMEDERIEAEKQRVKEEAQQLAMVFQTVGAFKVKRKGGKGKLIFGSVTAQDLVDIIKSQLQKDIDKRLVSLPEIRETGEYIAELKLHPDVTARVKINVFAN.

The N-terminal 42 residues, 1-42 (MASSTALSLSWSSSPCWSHSFNGGANETLKVSERRFNFEVVS), are a transit peptide targeting the chloroplast.

It belongs to the bacterial ribosomal protein bL9 family. As to quaternary structure, part of the 50S ribosomal subunit.

It localises to the plastid. The protein localises to the chloroplast. In terms of biological role, binds to the 23S rRNA. The protein is Large ribosomal subunit protein bL9c (RPL9) of Arabidopsis thaliana (Mouse-ear cress).